The chain runs to 244 residues: Thiol S-methyltransferase TMT1B (244 aa).

A signal peptide spans 1–23; that stretch reads MDILVPLLQLLVLLLTLPLHLMA.

Belongs to the methyltransferase superfamily. As to expression, expressed in the liver.

It is found in the endoplasmic reticulum membrane. It localises to the lipid droplet. Its subcellular location is the microsome. The protein resides in the cytoplasm. The protein localises to the cytosol. It catalyses the reaction a thiol + S-adenosyl-L-methionine = a methyl thioether + S-adenosyl-L-homocysteine + H(+). Its function is as follows. Thiol S-methyltransferase that catalyzes the transfer of a methyl group from S-adenosyl-L-methionine to alkyl and phenolic thiol-containing acceptor substrates. Together with TMT1B accounts for most of S-thiol methylation activity in the endoplasmic reticulum of hepatocytes. Selectively methylates S-centered nucleophiles from metabolites such as hydrogen sulfide and dithiothreitol. This chain is Thiol S-methyltransferase TMT1B, found in Homo sapiens (Human).